The sequence spans 810 residues: DNA gyrase subunit A (810 aa).

The Topo IIA-type catalytic domain maps to 36 to 502; the sequence is LPDVRDGLKP…EVLKTSMSDL (467 aa). Tyr-124 functions as the O-(5'-phospho-DNA)-tyrosine intermediate in the catalytic mechanism. The segment at 499-810 is C-terminal domain; the sequence is MSDLMQKENI…SLVSVSKFIK (312 aa). The GyrA-box signature appears at 529–535; that stretch reads QGTGGKG.

The protein belongs to the type II topoisomerase GyrA/ParC subunit family. In terms of assembly, heterotetramer, composed of two GyrA and two GyrB chains. In the heterotetramer, GyrA contains the active site tyrosine that forms a transient covalent intermediate with DNA, while GyrB binds cofactors and catalyzes ATP hydrolysis.

The protein resides in the cytoplasm. The catalysed reaction is ATP-dependent breakage, passage and rejoining of double-stranded DNA.. Functionally, a type II topoisomerase that negatively supercoils closed circular double-stranded (ds) DNA in an ATP-dependent manner to modulate DNA topology and maintain chromosomes in an underwound state. Negative supercoiling favors strand separation, and DNA replication, transcription, recombination and repair, all of which involve strand separation. Also able to catalyze the interconversion of other topological isomers of dsDNA rings, including catenanes and knotted rings. Type II topoisomerases break and join 2 DNA strands simultaneously in an ATP-dependent manner. In Borreliella burgdorferi (strain ATCC 35210 / DSM 4680 / CIP 102532 / B31) (Borrelia burgdorferi), this protein is DNA gyrase subunit A.